A 70-amino-acid chain; its full sequence is U2-agatoxin-Ao1m (70 aa).

A signal peptide spans Met1–Ala20. The propeptide occupies Val21–Arg34. Disulfide bonds link Cys37-Cys53, Cys44-Cys58, and Cys52-Cys68. Leu69 carries the leucine amide modification.

The protein belongs to the neurotoxin 01 (U2-agtx) family. Expressed by the venom gland.

It is found in the secreted. In terms of biological role, insect active toxin causing rapid but reversible paralysis in crickets. No activity shown in mammals. Does not show effect on mammalian voltage-gated calcium channels. The polypeptide is U2-agatoxin-Ao1m (Agelena orientalis (Funnel-web spider)).